The following is a 557-amino-acid chain: Membrane protein insertase YidC (557 aa).

The chain crosses the membrane as a helical span at residues 1 to 21 (MNWLRNSLIAAILVITYVLFI). The interval 52 to 71 (SDDAVASSATEESDVPEVSV) is disordered. The next 5 helical transmembrane spans lie at 346–366 (TIDY…LDFI), 369–389 (LVGN…AVFF), 439–459 (FGGC…YWMI), 470–490 (FFLW…PLLM), and 517–537 (PIGF…YWVV).

It belongs to the OXA1/ALB3/YidC family. Type 1 subfamily. As to quaternary structure, interacts with the Sec translocase complex via SecD. Specifically interacts with transmembrane segments of nascent integral membrane proteins during membrane integration.

It is found in the cell inner membrane. Its function is as follows. Required for the insertion and/or proper folding and/or complex formation of integral membrane proteins into the membrane. Involved in integration of membrane proteins that insert both dependently and independently of the Sec translocase complex, as well as at least some lipoproteins. Aids folding of multispanning membrane proteins. This is Membrane protein insertase YidC from Saccharophagus degradans (strain 2-40 / ATCC 43961 / DSM 17024).